Consider the following 264-residue polypeptide: 5'-nucleotidase SurE (264 aa).

D9, D10, S40, and N95 together coordinate a divalent metal cation.

Belongs to the SurE nucleotidase family. It depends on a divalent metal cation as a cofactor.

The protein resides in the cytoplasm. It carries out the reaction a ribonucleoside 5'-phosphate + H2O = a ribonucleoside + phosphate. Its function is as follows. Nucleotidase that shows phosphatase activity on nucleoside 5'-monophosphates. The chain is 5'-nucleotidase SurE from Helicobacter hepaticus (strain ATCC 51449 / 3B1).